A 300-amino-acid polypeptide reads, in one-letter code: Actin-related protein 2/3 complex subunit 2 (300 aa).

N6-acetyllysine occurs at positions 275 and 295.

The protein belongs to the ARPC2 family. In terms of assembly, component of the Arp2/3 complex composed of ACTR2/ARP2, ACTR3/ARP3, ARPC1B/p41-ARC, ARPC2/p34-ARC, ARPC3/p21-ARC, ARPC4/p20-ARC and ARPC5/p16-ARC. Interacts with SHANK3; the interaction probably mediates the association of SHANK3 with the Arp2/3 complex.

It localises to the cytoplasm. Its subcellular location is the cytoskeleton. The protein localises to the cell projection. The protein resides in the synapse. It is found in the synaptosome. It localises to the nucleus. In terms of biological role, actin-binding component of the Arp2/3 complex, a multiprotein complex that mediates actin polymerization upon stimulation by nucleation-promoting factor (NPF). The Arp2/3 complex mediates the formation of branched actin networks in the cytoplasm, providing the force for cell motility. Seems to contact the mother actin filament. In addition to its role in the cytoplasmic cytoskeleton, the Arp2/3 complex also promotes actin polymerization in the nucleus, thereby regulating gene transcription and repair of damaged DNA. The Arp2/3 complex promotes homologous recombination (HR) repair in response to DNA damage by promoting nuclear actin polymerization, leading to drive motility of double-strand breaks (DSBs). In Rattus norvegicus (Rat), this protein is Actin-related protein 2/3 complex subunit 2.